Consider the following 59-residue polypeptide: Potassium channel toxin alpha-KTx 1.2 (59 aa).

The first 22 residues, methionine 1–glycine 22, serve as a signal peptide directing secretion. Glutamine 23 is modified (pyrrolidone carboxylic acid). Intrachain disulfides connect cysteine 29–cysteine 50, cysteine 35–cysteine 55, and cysteine 39–cysteine 57. The segment at glycine 48–cysteine 55 is interaction with Ca(2+)-activated K(+) channels.

The protein belongs to the short scorpion toxin superfamily. Potassium channel inhibitor family. Alpha-KTx 01 subfamily. In terms of tissue distribution, expressed by the venom gland.

The protein resides in the secreted. Its function is as follows. Blocks calcium-activated potassium channels (Kd=43 nM on KCa1.1/KCNMA1). Has a potent presynaptic facilitatory action, with less effect on direct muscle stimulation. This Leiurus hebraeus (Hebrew deathstalker scorpion) protein is Potassium channel toxin alpha-KTx 1.2.